A 245-amino-acid chain; its full sequence is Membrane-spanning 4-domains subfamily A member 15 (245 aa).

The tract at residues methionine 1–alanine 30 is disordered. 4 consecutive transmembrane segments (helical) span residues glycine 78 to valine 98, leucine 103 to serine 123, isoleucine 147 to threonine 167, and leucine 176 to phenylalanine 196.

It belongs to the MS4A family.

Its subcellular location is the membrane. May be involved in signal transduction as a component of a multimeric receptor complex. This is Membrane-spanning 4-domains subfamily A member 15 (Ms4a15) from Mus musculus (Mouse).